The following is a 343-amino-acid chain: Holliday junction branch migration complex subunit RuvB (343 aa).

Residues 1–26 form a disordered region; the sequence is MKEKILTFSSDPSSPVTRHETEEDTG. The tract at residues 3-193 is large ATPase domain (RuvB-L); the sequence is EKILTFSSDP…FGIFRKFDFY (191 aa). Positions 7 to 16 are enriched in polar residues; it reads TFSSDPSSPV. ATP-binding positions include L32, R33, G74, K77, T78, T79, 140–142, R183, Y193, and R230; that span reads EDF. Residue T78 participates in Mg(2+) binding. Residues 194–264 are small ATPAse domain (RuvB-S); that stretch reads SRQDLARIVS…AIDDALALEG (71 aa). The tract at residues 267–343 is head domain (RuvB-H); sequence EKGLTGLDRS…YRHLGVQWRG (77 aa). DNA contacts are provided by R322 and R327.

This sequence belongs to the RuvB family. In terms of assembly, homohexamer. Forms an RuvA(8)-RuvB(12)-Holliday junction (HJ) complex. HJ DNA is sandwiched between 2 RuvA tetramers; dsDNA enters through RuvA and exits via RuvB. An RuvB hexamer assembles on each DNA strand where it exits the tetramer. Each RuvB hexamer is contacted by two RuvA subunits (via domain III) on 2 adjacent RuvB subunits; this complex drives branch migration. In the full resolvosome a probable DNA-RuvA(4)-RuvB(12)-RuvC(2) complex forms which resolves the HJ.

It is found in the cytoplasm. The catalysed reaction is ATP + H2O = ADP + phosphate + H(+). In terms of biological role, the RuvA-RuvB-RuvC complex processes Holliday junction (HJ) DNA during genetic recombination and DNA repair, while the RuvA-RuvB complex plays an important role in the rescue of blocked DNA replication forks via replication fork reversal (RFR). RuvA specifically binds to HJ cruciform DNA, conferring on it an open structure. The RuvB hexamer acts as an ATP-dependent pump, pulling dsDNA into and through the RuvAB complex. RuvB forms 2 homohexamers on either side of HJ DNA bound by 1 or 2 RuvA tetramers; 4 subunits per hexamer contact DNA at a time. Coordinated motions by a converter formed by DNA-disengaged RuvB subunits stimulates ATP hydrolysis and nucleotide exchange. Immobilization of the converter enables RuvB to convert the ATP-contained energy into a lever motion, pulling 2 nucleotides of DNA out of the RuvA tetramer per ATP hydrolyzed, thus driving DNA branch migration. The RuvB motors rotate together with the DNA substrate, which together with the progressing nucleotide cycle form the mechanistic basis for DNA recombination by continuous HJ branch migration. Branch migration allows RuvC to scan DNA until it finds its consensus sequence, where it cleaves and resolves cruciform DNA. This is Holliday junction branch migration complex subunit RuvB from Desulfosudis oleivorans (strain DSM 6200 / JCM 39069 / Hxd3) (Desulfococcus oleovorans).